A 608-amino-acid polypeptide reads, in one-letter code: 2',5'-phosphodiesterase 12 (608 aa).

A mitochondrion-targeting transit peptide spans 1–16 (MWRLPGRAALRGVRSV). The tract at residues 91–111 (AKKSRKNRAHSSGGAACAATG) is disordered. A compositionally biased stretch (low complexity) spans 100-111 (HSSGGAACAATG). At Ser216 the chain carries Phosphoserine. Residues Glu350, Asp495, and Asn497 each contribute to the Mg(2+) site. Asp495 functions as the Proton donor/acceptor in the catalytic mechanism.

The protein belongs to the CCR4/nocturin family. The cofactor is Mg(2+).

It localises to the mitochondrion matrix. The enzyme catalyses Exonucleolytic cleavage of poly(A) to 5'-AMP.. Its function is as follows. Enzyme that cleaves 2',5'-phosphodiester bond linking adenosines of the 5'-triphosphorylated oligoadenylates, triphosphorylated oligoadenylates referred as 2-5A modulates the 2-5A system. Degrades triphosphorylated 2-5A to produce AMP and ATP. Also cleaves 3',5'-phosphodiester bond of oligoadenylates. Plays a role as a negative regulator of the 2-5A system that is one of the major pathways for antiviral and antitumor functions induced by interferons (IFNs). Suppression of this enzyme increases cellular 2-5A levels and decreases viral replication in cultured small-airway epithelial cells. This is 2',5'-phosphodiesterase 12 (Pde12) from Rattus norvegicus (Rat).